We begin with the raw amino-acid sequence, 219 residues long: Chloramphenicol acetyltransferase (219 aa).

Residue histidine 190 is the Proton acceptor of the active site.

It belongs to the chloramphenicol acetyltransferase family. In terms of assembly, homotrimer.

The enzyme catalyses chloramphenicol + acetyl-CoA = chloramphenicol 3-acetate + CoA. Its function is as follows. This enzyme is an effector of chloramphenicol resistance in bacteria. The sequence is that of Chloramphenicol acetyltransferase (catB) from Clostridium butyricum.